The primary structure comprises 180 residues: NADH-quinone oxidoreductase subunit I (180 aa).

2 4Fe-4S ferredoxin-type domains span residues 48–80 (IVLT…LQKA) and 90–119 (EFFR…LTPD). 8 residues coordinate [4Fe-4S] cluster: cysteine 60, cysteine 63, cysteine 66, cysteine 70, cysteine 99, cysteine 102, cysteine 105, and cysteine 109. The interval 160–180 (GKPKGSAQKEAAPIDVKSILP) is disordered.

It belongs to the complex I 23 kDa subunit family. In terms of assembly, NDH-1 is composed of 14 different subunits. Subunits NuoA, H, J, K, L, M, N constitute the membrane sector of the complex. It depends on [4Fe-4S] cluster as a cofactor.

The protein resides in the cell inner membrane. The enzyme catalyses a quinone + NADH + 5 H(+)(in) = a quinol + NAD(+) + 4 H(+)(out). Its function is as follows. NDH-1 shuttles electrons from NADH, via FMN and iron-sulfur (Fe-S) centers, to quinones in the respiratory chain. The immediate electron acceptor for the enzyme in this species is believed to be ubiquinone. Couples the redox reaction to proton translocation (for every two electrons transferred, four hydrogen ions are translocated across the cytoplasmic membrane), and thus conserves the redox energy in a proton gradient. This Tolumonas auensis (strain DSM 9187 / NBRC 110442 / TA 4) protein is NADH-quinone oxidoreductase subunit I.